The sequence spans 270 residues: Shikimate dehydrogenase (NADP(+)) (270 aa).

Shikimate is bound by residues 15 to 17 (SKS) and threonine 62. Lysine 66 (proton acceptor) is an active-site residue. Residues asparagine 87 and aspartate 102 each coordinate shikimate. Residues 127–131 (GAGGA), 151–156 (NRTVAR), and methionine 214 contribute to the NADP(+) site. Residue tyrosine 216 coordinates shikimate. Position 238 (glycine 238) interacts with NADP(+).

This sequence belongs to the shikimate dehydrogenase family. As to quaternary structure, homodimer.

It carries out the reaction shikimate + NADP(+) = 3-dehydroshikimate + NADPH + H(+). It functions in the pathway metabolic intermediate biosynthesis; chorismate biosynthesis; chorismate from D-erythrose 4-phosphate and phosphoenolpyruvate: step 4/7. Functionally, involved in the biosynthesis of the chorismate, which leads to the biosynthesis of aromatic amino acids. Catalyzes the reversible NADPH linked reduction of 3-dehydroshikimate (DHSA) to yield shikimate (SA). This is Shikimate dehydrogenase (NADP(+)) from Alkalilimnicola ehrlichii (strain ATCC BAA-1101 / DSM 17681 / MLHE-1).